The primary structure comprises 222 residues: 7-cyano-7-deazaguanine synthase (222 aa).

7–17 serves as a coordination point for ATP; sequence LSGGMDSAVAT. Zn(2+) is bound by residues C188, C196, C199, and C202.

It belongs to the QueC family. Zn(2+) serves as cofactor.

The enzyme catalyses 7-carboxy-7-deazaguanine + NH4(+) + ATP = 7-cyano-7-deazaguanine + ADP + phosphate + H2O + H(+). It participates in purine metabolism; 7-cyano-7-deazaguanine biosynthesis. Functionally, catalyzes the ATP-dependent conversion of 7-carboxy-7-deazaguanine (CDG) to 7-cyano-7-deazaguanine (preQ(0)). The protein is 7-cyano-7-deazaguanine synthase of Methanothermobacter thermautotrophicus (strain ATCC 29096 / DSM 1053 / JCM 10044 / NBRC 100330 / Delta H) (Methanobacterium thermoautotrophicum).